A 103-amino-acid polypeptide reads, in one-letter code: Histone H4, minor (103 aa).

Residues 1-12 (MAGGKGGKGMGK) are compositionally biased toward gly residues. The interval 1–29 (MAGGKGGKGMGKVGAKRHSRKSNKASIEG) is disordered. N6-acetyllysine occurs at positions 5, 8, 12, and 16. Residues 14 to 23 (GAKRHSRKSN) show a composition bias toward basic residues. The DNA-binding element occupies 16 to 21 (KRHSRK).

It belongs to the histone H4 family. The nucleosome is a histone octamer containing two molecules each of H2A, H2B, H3 and H4 assembled in one H3-H4 heterotetramer and two H2A-H2B heterodimers. The octamer wraps approximately 147 bp of DNA.

The protein localises to the nucleus. It localises to the chromosome. Functionally, core component of nucleosome. Nucleosomes wrap and compact DNA into chromatin, limiting DNA accessibility to the cellular machineries which require DNA as a template. Histones thereby play a central role in transcription regulation, DNA repair, DNA replication and chromosomal stability. DNA accessibility is regulated via a complex set of post-translational modifications of histones, also called histone code, and nucleosome remodeling. In Tetrahymena pyriformis, this protein is Histone H4, minor.